A 352-amino-acid polypeptide reads, in one-letter code: Phosphate acyltransferase (352 aa).

Residues 328-339 show a composition bias toward basic and acidic residues; sequence ESFPGDAREREG. A disordered region spans residues 328–352; the sequence is ESFPGDAREREGAQAPDAGTERVAS.

Belongs to the PlsX family. Homodimer. Probably interacts with PlsY.

It localises to the cytoplasm. It catalyses the reaction a fatty acyl-[ACP] + phosphate = an acyl phosphate + holo-[ACP]. It functions in the pathway lipid metabolism; phospholipid metabolism. Catalyzes the reversible formation of acyl-phosphate (acyl-PO(4)) from acyl-[acyl-carrier-protein] (acyl-ACP). This enzyme utilizes acyl-ACP as fatty acyl donor, but not acyl-CoA. In Geobacter sp. (strain M21), this protein is Phosphate acyltransferase.